A 118-amino-acid polypeptide reads, in one-letter code: Holo-[acyl-carrier-protein] synthase (118 aa).

Mg(2+) contacts are provided by Asp8 and Glu58.

Belongs to the P-Pant transferase superfamily. AcpS family. It depends on Mg(2+) as a cofactor.

It localises to the cytoplasm. It carries out the reaction apo-[ACP] + CoA = holo-[ACP] + adenosine 3',5'-bisphosphate + H(+). Functionally, transfers the 4'-phosphopantetheine moiety from coenzyme A to a Ser of acyl-carrier-protein. The protein is Holo-[acyl-carrier-protein] synthase of Listeria innocua serovar 6a (strain ATCC BAA-680 / CLIP 11262).